A 58-amino-acid polypeptide reads, in one-letter code: Ribosome biogenesis protein Nop10 (58 aa).

This sequence belongs to the NOP10 family.

Functionally, involved in ribosome biogenesis; more specifically in 18S rRNA pseudouridylation and in cleavage of pre-rRNA. This Thermococcus onnurineus (strain NA1) protein is Ribosome biogenesis protein Nop10.